The primary structure comprises 141 residues: Large ribosomal subunit protein uL11 (141 aa).

This sequence belongs to the universal ribosomal protein uL11 family. Part of the ribosomal stalk of the 50S ribosomal subunit. Interacts with L10 and the large rRNA to form the base of the stalk. L10 forms an elongated spine to which L12 dimers bind in a sequential fashion forming a multimeric L10(L12)X complex. In terms of processing, one or more lysine residues are methylated.

In terms of biological role, forms part of the ribosomal stalk which helps the ribosome interact with GTP-bound translation factors. The sequence is that of Large ribosomal subunit protein uL11 from Prochlorococcus marinus subsp. pastoris (strain CCMP1986 / NIES-2087 / MED4).